The chain runs to 465 residues: GTPase Der (465 aa).

EngA-type G domains lie at 3–167 and 179–352; these read PLVA…PEEG and VRIA…ASAT. GTP is bound by residues 9-16, 57-61, 119-122, 185-192, 232-236, and 297-300; these read GRPNVGKS, DTGGI, NKID, DTAGL, and NKWD. Positions 353 to 437 constitute a KH-like domain; sequence HEFSTSEVNQ…PVRFIFREGA (85 aa).

It belongs to the TRAFAC class TrmE-Era-EngA-EngB-Septin-like GTPase superfamily. EngA (Der) GTPase family. Associates with the 50S ribosomal subunit.

Its function is as follows. GTPase that plays an essential role in the late steps of ribosome biogenesis. In Xanthomonas campestris pv. campestris (strain 8004), this protein is GTPase Der.